A 118-amino-acid chain; its full sequence is NLYQLKNMIKCTNTRHWVSFTNYGCYCGYGGSGTPVDELDKCCQVHDKCYDTAKHVCKCSPSMTMYSYDCSEGKLTCKDNNTKCKDFVCNCDRTAALCFAKAPYNNKNFKIDPTKGCQ.

Disulfide bonds link Cys11–Cys70, Cys25–Cys117, Cys27–Cys43, Cys42–Cys98, Cys49–Cys91, Cys59–Cys84, and Cys77–Cys89. Residues Tyr26, Gly28, and Gly30 each coordinate Ca(2+). Residue His46 is part of the active site. Asp47 provides a ligand contact to Ca(2+). The active site involves Asp92.

Belongs to the phospholipase A2 family. Group I subfamily. D49 sub-subfamily. Ca(2+) is required as a cofactor. Expressed by the venom gland.

The protein localises to the secreted. It catalyses the reaction a 1,2-diacyl-sn-glycero-3-phosphocholine + H2O = a 1-acyl-sn-glycero-3-phosphocholine + a fatty acid + H(+). Snake venom phospholipase A2 (PLA2) that has only a weak enzymatic activity. It has a myotoxic activity in vivo (dystrophic effect). PLA2 catalyzes the calcium-dependent hydrolysis of the 2-acyl groups in 3-sn-phosphoglycerides. The sequence is that of Basic phospholipase A2 nigroxin A from Micrurus nigrocinctus (Central American coral snake).